The following is a 340-amino-acid chain: Heat-inducible transcription repressor HrcA (340 aa).

Belongs to the HrcA family.

Negative regulator of class I heat shock genes (grpE-dnaK-dnaJ and groELS operons). Prevents heat-shock induction of these operons. The polypeptide is Heat-inducible transcription repressor HrcA (Mycoplasmopsis synoviae (strain 53) (Mycoplasma synoviae)).